The primary structure comprises 331 residues: Homoserine O-succinyltransferase (331 aa).

The Acyl-thioester intermediate role is filled by cysteine 141. Residues lysine 162 and serine 190 each coordinate substrate. Residue histidine 233 is the Proton acceptor of the active site. Residue glutamate 235 is part of the active site. Arginine 247 provides a ligand contact to substrate.

Belongs to the MetA family.

It localises to the cytoplasm. It catalyses the reaction L-homoserine + succinyl-CoA = O-succinyl-L-homoserine + CoA. It functions in the pathway amino-acid biosynthesis; L-methionine biosynthesis via de novo pathway; O-succinyl-L-homoserine from L-homoserine: step 1/1. Transfers a succinyl group from succinyl-CoA to L-homoserine, forming succinyl-L-homoserine. In Methylorubrum extorquens (strain DSM 6343 / CIP 106787 / DM4) (Methylobacterium extorquens), this protein is Homoserine O-succinyltransferase.